The sequence spans 447 residues: Acyl-lipid (7-3)-desaturase (447 aa).

A Cytochrome b5 heme-binding domain is found at 36-94; it reads LTIVGDSVYDAKAFRSEHPGGAHFVSLFGGRDATEAFMEYHRRAWPKSRMSRFHVGSLA. 2 residues coordinate heme: His-53 and His-76. Helical transmembrane passes span 123–143, 154–174, and 185–205; these read GFAP…AIAL, LLPS…IQHD, and SVNL…ILWL. Positions 173-177 match the Histidine box-1 motif; that stretch reads HDANH. The Histidine box-2 motif lies at 208-213; that stretch reads HVVMHH. 3 consecutive transmembrane segments (helical) span residues 244-264, 286-306, and 315-335; these read WLQH…LLFL, LFMP…ALPL, and AVCI…FFFI. The Histidine box-3 motif lies at 386–390; that stretch reads QIEHH.

This sequence belongs to the fatty acid desaturase type 1 family. Requires Fe(2+) as cofactor.

Its subcellular location is the membrane. It catalyses the reaction a (7Z,10Z,13Z,16Z,19Z)-docosapentaenoyl-containing glycerolipid + 2 Fe(II)-[cytochrome b5] + O2 + 2 H(+) = a (4Z,7Z,10Z,13Z,16Z,19Z)-docosahexaenoyl-containing glycerolipid + 2 Fe(III)-[cytochrome b5] + 2 H2O. The catalysed reaction is a (7Z,10Z,13Z,16Z)-docosatetraenoyl-containing glycerolipid + 2 Fe(II)-[cytochrome b5] + O2 + 2 H(+) = a (4Z,7Z,10Z,13Z,16Z)-docosapentaenoyl-containing glycerolipid + 2 Fe(III)-[cytochrome b5] + 2 H2O. Its function is as follows. Fatty acid desaturase that introduces a cis double bond at the 4-position in 22-carbon polyunsaturated fatty acids that contain a Delta(7) double bond, resulting in the production of delta-4 desaturated fatty acid docosahexanoic acid (DHA). This Rebecca salina (Marine microalga) protein is Acyl-lipid (7-3)-desaturase.